Here is a 217-residue protein sequence, read N- to C-terminus: GrpE protein homolog 1, mitochondrial (217 aa).

A mitochondrion-targeting transit peptide spans M1–L27. Residue K94 is modified to N6-acetyllysine; alternate. N6-succinyllysine; alternate is present on K94. N6-acetyllysine is present on K100. K120 carries the post-translational modification N6-succinyllysine. The residue at position 215 (K215) is an N6-acetyllysine; alternate. The residue at position 215 (K215) is an N6-succinyllysine; alternate.

The protein belongs to the GrpE family. In terms of assembly, probable component of the PAM complex at least composed of a mitochondrial HSP70 protein, GRPEL1 or GRPEL2, TIMM44, TIMM16/PAM16 and TIMM14/DNAJC19. Binds to HSP70, HSC70 and HSJ1B.

Its subcellular location is the mitochondrion matrix. Its function is as follows. Essential component of the PAM complex, a complex required for the translocation of transit peptide-containing proteins from the inner membrane into the mitochondrial matrix in an ATP-dependent manner. Seems to control the nucleotide-dependent binding of mitochondrial HSP70 to substrate proteins. The protein is GrpE protein homolog 1, mitochondrial (GRPEL1) of Bos taurus (Bovine).